Here is an 89-residue protein sequence, read N- to C-terminus: Small ribosomal subunit protein uS17 (89 aa).

It belongs to the universal ribosomal protein uS17 family. As to quaternary structure, part of the 30S ribosomal subunit.

Functionally, one of the primary rRNA binding proteins, it binds specifically to the 5'-end of 16S ribosomal RNA. The chain is Small ribosomal subunit protein uS17 from Chlorobaculum tepidum (strain ATCC 49652 / DSM 12025 / NBRC 103806 / TLS) (Chlorobium tepidum).